Here is a 588-residue protein sequence, read N- to C-terminus: Arylsulfatase L (588 aa).

The signal sequence occupies residues 1 to 31 (MLHLHHSWLCFRSWLAGMLSVLLGLVPSASS). The N-linked (GlcNAc...) asparagine glycan is linked to N32. D46 and D47 together coordinate Ca(2+). N-linked (GlcNAc...) asparagine glycosylation is present at N58. C86 serves as a coordination point for Ca(2+). C86 acts as the Nucleophile in catalysis. C86 bears the 3-oxoalanine (Cys) mark. An N-linked (GlcNAc...) asparagine glycan is attached at N125. K145 is a substrate binding site. Residue H147 is part of the active site. A glycan (N-linked (GlcNAc...) asparagine) is linked at N258. H301 provides a ligand contact to substrate. Residue N344 is glycosylated (N-linked (GlcNAc...) asparagine). Residues D353 and H354 each contribute to the Ca(2+) site. K378 provides a ligand contact to substrate.

This sequence belongs to the sulfatase family. Ca(2+) is required as a cofactor. The conversion to 3-oxoalanine (also known as C-formylglycine, FGly), of a serine or cysteine residue in prokaryotes and of a cysteine residue in eukaryotes, is critical for catalytic activity.

It is found in the golgi apparatus. The protein resides in the golgi stack. The catalysed reaction is an aryl sulfate + H2O = a phenol + sulfate + H(+). In terms of biological role, exhibits arylsulfatase activity towards the artificial substrate 4-methylumbelliferyl sulfate. May be essential for the correct composition of cartilage and bone matrix during development. Has no activity toward steroid sulfates. The polypeptide is Arylsulfatase L (ARSL) (Macaca fascicularis (Crab-eating macaque)).